Consider the following 248-residue polypeptide: Granulin (248 aa).

This sequence belongs to the polyhedrin family.

Component of the virus occlusion bodies, which are large proteinaceous structures, that protect the virus from the outside environment for extended periods until they are ingested by insect larvae. The sequence is that of Granulin from Zygaenidae (burnets).